Reading from the N-terminus, the 488-residue chain is Probable aldehyde dehydrogenase (488 aa).

Residue 240-245 participates in NAD(+) binding; sequence GSSVTG. Residues glutamate 262 and cysteine 296 contribute to the active site.

The protein belongs to the aldehyde dehydrogenase family.

It catalyses the reaction an aldehyde + NAD(+) + H2O = a carboxylate + NADH + 2 H(+). In terms of biological role, involved in an alpha-terpineol oxidation system. This chain is Probable aldehyde dehydrogenase (terPE), found in Pseudomonas sp.